Here is a 305-residue protein sequence, read N- to C-terminus: Putative UDP-glucose 4-epimerase (305 aa).

NAD(+) contacts are provided by residues 10–11, 30–35, 50–51, and 71–75; these read FI, DNLTTG, DI, and QAAQI. Residues serine 115 and tyrosine 140 each contribute to the substrate site. Positions 140 and 144 each coordinate NAD(+). The active-site Proton acceptor is the tyrosine 140. Residues asparagine 169, 183 to 184, 198 to 200, arginine 207, and 263 to 266 contribute to the substrate site; these read VI, IIF, and REGE.

Belongs to the NAD(P)-dependent epimerase/dehydratase family. NAD(+) serves as cofactor.

It carries out the reaction UDP-alpha-D-glucose = UDP-alpha-D-galactose. Its pathway is carbohydrate metabolism; galactose metabolism. In terms of biological role, involved in the metabolism of galactose. Catalyzes the conversion of UDP-galactose (UDP-Gal) to UDP-glucose (UDP-Glc) through a mechanism involving the transient reduction of NAD. This is Putative UDP-glucose 4-epimerase from Methanocaldococcus jannaschii (strain ATCC 43067 / DSM 2661 / JAL-1 / JCM 10045 / NBRC 100440) (Methanococcus jannaschii).